We begin with the raw amino-acid sequence, 213 residues long: Uridine kinase (213 aa).

15–22 contacts ATP; that stretch reads GGSGSGKT.

Belongs to the uridine kinase family.

It localises to the cytoplasm. It carries out the reaction uridine + ATP = UMP + ADP + H(+). The enzyme catalyses cytidine + ATP = CMP + ADP + H(+). It participates in pyrimidine metabolism; CTP biosynthesis via salvage pathway; CTP from cytidine: step 1/3. It functions in the pathway pyrimidine metabolism; UMP biosynthesis via salvage pathway; UMP from uridine: step 1/1. The protein is Uridine kinase of Ligilactobacillus salivarius (strain UCC118) (Lactobacillus salivarius).